The sequence spans 343 residues: Tetraacyldisaccharide 4'-kinase (343 aa).

Position 65–72 (65–72 (HAGGTGKT)) interacts with ATP.

Belongs to the LpxK family.

The enzyme catalyses a lipid A disaccharide + ATP = a lipid IVA + ADP + H(+). It participates in glycolipid biosynthesis; lipid IV(A) biosynthesis; lipid IV(A) from (3R)-3-hydroxytetradecanoyl-[acyl-carrier-protein] and UDP-N-acetyl-alpha-D-glucosamine: step 6/6. Functionally, transfers the gamma-phosphate of ATP to the 4'-position of a tetraacyldisaccharide 1-phosphate intermediate (termed DS-1-P) to form tetraacyldisaccharide 1,4'-bis-phosphate (lipid IVA). The chain is Tetraacyldisaccharide 4'-kinase from Neisseria gonorrhoeae (strain ATCC 700825 / FA 1090).